Reading from the N-terminus, the 460-residue chain is Notoamide biosynthesis cluster transcriptional coactivator notR (460 aa).

Positions 74-145 constitute an HTH iclR-type domain; that stretch reads LQDLARQVEI…EPMPNYVSHT (72 aa). Positions 107-126 form a DNA-binding region, H-T-H motif; that stretch reads IQDLADLAGVPDIQLRRVIR. A disordered region spans residues 300–320; the sequence is TRDFTPQPESSPRPGSASSRV.

The protein resides in the nucleus. In terms of biological role, transcription factor that probably regulates the expression of the gene cluster that mediates the biosynthesis of notoamide, a fungal indole alkaloid that belongs to a family of natural products containing a characteristic bicyclo[2.2.2]diazaoctane core. In Aspergillus sp. (strain MF297-2), this protein is Notoamide biosynthesis cluster transcriptional coactivator notR.